A 166-amino-acid polypeptide reads, in one-letter code: Regulatory protein RecX (166 aa).

Belongs to the RecX family.

It is found in the cytoplasm. Functionally, modulates RecA activity. This Salmonella paratyphi A (strain ATCC 9150 / SARB42) protein is Regulatory protein RecX.